The chain runs to 257 residues: Global transcriptional regulator CodY (257 aa).

A GAF domain region spans residues 1–155 (MSLLSKTREL…AATVLGMEIL (155 aa)). The H-T-H motif DNA-binding region spans 203–222 (ASKVADRVGITRSVIVNALR).

This sequence belongs to the CodY family.

It is found in the cytoplasm. In terms of biological role, DNA-binding global transcriptional regulator which is involved in the adaptive response to starvation and acts by directly or indirectly controlling the expression of numerous genes in response to nutrient availability. During rapid exponential growth, CodY is highly active and represses genes whose products allow adaptation to nutrient depletion. This is Global transcriptional regulator CodY from Staphylococcus carnosus (strain TM300).